A 188-amino-acid chain; its full sequence is MKQPNKAPRANIAAPKGTATPKRRRKTRDELDAEARDRKRQKKHSGNRSGARTNVEGSNKKGHSQTQEKDPRVGSKVPVPLVIESQVKAKSMPKPVENNVVKPRLTPEEELAKLENDERLDALLDRLDNDEVLNKEDQAYVDLTLDRIDALMEQLGIELGDDEDDVEREEKQEDILQLLKRGNPKDTF.

Disordered stretches follow at residues 1-80 and 162-188; these read MKQP…VPVP and DEDD…KDTF. Basic and acidic residues predominate over residues 27–37; it reads TRDELDAEARD. Positions 47–57 are enriched in polar residues; that stretch reads NRSGARTNVEG.

This sequence belongs to the YihI family. In terms of assembly, interacts with Der.

Functionally, a GTPase-activating protein (GAP) that modifies Der/EngA GTPase function. May play a role in ribosome biogenesis. This is Der GTPase-activating protein YihI from Yersinia pseudotuberculosis serotype O:3 (strain YPIII).